We begin with the raw amino-acid sequence, 380 residues long: Homoserine O-acetyltransferase (380 aa).

In terms of domain architecture, AB hydrolase-1 spans 70–366 (NAVLVFHALT…SPHGHDAFLI (297 aa)). S186 functions as the Nucleophile in the catalytic mechanism. Substrate is bound at residue R250. Catalysis depends on residues D333 and H361. D362 contacts substrate.

This sequence belongs to the AB hydrolase superfamily. MetX family. As to quaternary structure, homodimer.

Its subcellular location is the cytoplasm. It catalyses the reaction L-homoserine + acetyl-CoA = O-acetyl-L-homoserine + CoA. It functions in the pathway amino-acid biosynthesis; L-methionine biosynthesis via de novo pathway; O-acetyl-L-homoserine from L-homoserine: step 1/1. In terms of biological role, transfers an acetyl group from acetyl-CoA to L-homoserine, forming acetyl-L-homoserine. The sequence is that of Homoserine O-acetyltransferase from Thermus thermophilus (strain ATCC BAA-163 / DSM 7039 / HB27).